Reading from the N-terminus, the 561-residue chain is DNA ligase (561 aa).

E247 contacts ATP. K249 serves as the catalytic N6-AMP-lysine intermediate. Residues R254, R269, E299, F339, R414, and K420 each coordinate ATP.

The protein belongs to the ATP-dependent DNA ligase family. As to quaternary structure, monomer. Requires Mg(2+) as cofactor.

The enzyme catalyses ATP + (deoxyribonucleotide)n-3'-hydroxyl + 5'-phospho-(deoxyribonucleotide)m = (deoxyribonucleotide)n+m + AMP + diphosphate.. Functionally, DNA ligase that seals nicks in double-stranded DNA during DNA replication, DNA recombination and DNA repair. In Pyrococcus furiosus (strain ATCC 43587 / DSM 3638 / JCM 8422 / Vc1), this protein is DNA ligase.